Here is a 404-residue protein sequence, read N- to C-terminus: Homoserine O-succinyltransferase (404 aa).

The segment covering 1-25 (MTDIQADPAVTAADAAQADTSSPTA) has biased composition (low complexity). The segment at 1–30 (MTDIQADPAVTAADAAQADTSSPTAHQGKP) is disordered. In terms of domain architecture, AB hydrolase-1 spans 75-384 (NAVLICHALN…HGHDAFLLED (310 aa)). Serine 179 serves as the catalytic Nucleophile. Arginine 249 is a substrate binding site. Residues aspartate 344 and histidine 377 contribute to the active site. Aspartate 378 serves as a coordination point for substrate.

The protein belongs to the AB hydrolase superfamily. MetX family. As to quaternary structure, homodimer.

The protein localises to the cytoplasm. The catalysed reaction is L-homoserine + succinyl-CoA = O-succinyl-L-homoserine + CoA. It participates in amino-acid biosynthesis; L-methionine biosynthesis via de novo pathway; O-succinyl-L-homoserine from L-homoserine: step 1/1. Its function is as follows. Transfers a succinyl group from succinyl-CoA to L-homoserine, forming succinyl-L-homoserine. The protein is Homoserine O-succinyltransferase of Ralstonia pickettii (strain 12J).